The following is a 138-amino-acid chain: Translation initiation factor 5A (138 aa).

Lys37 bears the Hypusine mark.

The protein belongs to the eIF-5A family.

It is found in the cytoplasm. Functionally, functions by promoting the formation of the first peptide bond. In Pyrococcus furiosus (strain ATCC 43587 / DSM 3638 / JCM 8422 / Vc1), this protein is Translation initiation factor 5A.